The following is a 144-amino-acid chain: Putative pre-16S rRNA nuclease (144 aa).

It belongs to the YqgF nuclease family.

It localises to the cytoplasm. Could be a nuclease involved in processing of the 5'-end of pre-16S rRNA. This Oleidesulfovibrio alaskensis (strain ATCC BAA-1058 / DSM 17464 / G20) (Desulfovibrio alaskensis) protein is Putative pre-16S rRNA nuclease.